Here is a 445-residue protein sequence, read N- to C-terminus: 3-phosphoshikimate 1-carboxyvinyltransferase (445 aa).

Positions 34, 35, and 39 each coordinate 3-phosphoshikimate. Lys34 lines the phosphoenolpyruvate pocket. Phosphoenolpyruvate contacts are provided by Gly112 and Arg140. 3-phosphoshikimate-binding residues include Ser186, Ser187, Gln188, Ser216, Glu331, and His358. A phosphoenolpyruvate-binding site is contributed by Gln188. Residue Glu331 is the Proton acceptor of the active site. Phosphoenolpyruvate-binding residues include Arg362, Arg403, and Lys428.

This sequence belongs to the EPSP synthase family. Monomer.

Its subcellular location is the cytoplasm. The enzyme catalyses 3-phosphoshikimate + phosphoenolpyruvate = 5-O-(1-carboxyvinyl)-3-phosphoshikimate + phosphate. The protein operates within metabolic intermediate biosynthesis; chorismate biosynthesis; chorismate from D-erythrose 4-phosphate and phosphoenolpyruvate: step 6/7. Catalyzes the transfer of the enolpyruvyl moiety of phosphoenolpyruvate (PEP) to the 5-hydroxyl of shikimate-3-phosphate (S3P) to produce enolpyruvyl shikimate-3-phosphate and inorganic phosphate. The protein is 3-phosphoshikimate 1-carboxyvinyltransferase of Kocuria rhizophila (strain ATCC 9341 / DSM 348 / NBRC 103217 / DC2201).